The primary structure comprises 158 residues: Sec-independent protein translocase protein TatB (158 aa).

The helical transmembrane segment at 2-22 threads the bilayer; it reads FDGIGFMELLLIGVLGLVVLG. The segment at 86 to 158 is disordered; the sequence is LKQAAQSVNR…DTSSNPKANG (73 aa). 3 stretches are compositionally biased toward polar residues: residues 88–107, 113–136, and 143–158; these read QAAQSVNRPYQVQDSSSQGT, QIHSPAQVSQTNPTTPLETSQHLT, and EPSQGVDTSSNPKANG.

This sequence belongs to the TatB family. In terms of assembly, the Tat system comprises two distinct complexes: a TatABC complex, containing multiple copies of TatA, TatB and TatC subunits, and a separate TatA complex, containing only TatA subunits. Substrates initially bind to the TatABC complex, which probably triggers association of the separate TatA complex to form the active translocon.

The protein localises to the cell inner membrane. Its function is as follows. Part of the twin-arginine translocation (Tat) system that transports large folded proteins containing a characteristic twin-arginine motif in their signal peptide across membranes. Together with TatC, TatB is part of a receptor directly interacting with Tat signal peptides. TatB may form an oligomeric binding site that transiently accommodates folded Tat precursor proteins before their translocation. The sequence is that of Sec-independent protein translocase protein TatB from Shewanella putrefaciens (strain CN-32 / ATCC BAA-453).